We begin with the raw amino-acid sequence, 496 residues long: Beta-N-acetylhexosaminidase (496 aa).

E298 acts as the Proton donor in catalysis.

Belongs to the glycosyl hydrolase 20 family.

The catalysed reaction is Hydrolysis of terminal non-reducing N-acetyl-D-hexosamine residues in N-acetyl-beta-D-hexosaminides.. Its pathway is glycan degradation; chitin degradation. Its function is as follows. Catalyzes the cleavage of beta-N-acetylglucosaminides and beta-N-acetylgalactosaminides. Also catalyzes the hydrolysis of N-acetylchitooligomers. May be involved in chitin degradation. It is not able to cleave beta-glucosides. This Cellulomonas fimi protein is Beta-N-acetylhexosaminidase (hex20).